Reading from the N-terminus, the 907-residue chain is Gamma-tubulin complex component 3 (907 aa).

At Ala-2 the chain carries N-acetylalanine. Ser-113 is modified (phosphoserine). Residues 210–230 show a composition bias toward polar residues; sequence NQPSSQATTSKGVPSAVSRNM. The disordered stretch occupies residues 210 to 241; the sequence is NQPSSQATTSKGVPSAVSRNMTRSRREGDTGG.

It belongs to the TUBGCP family. Component of the gamma-tubulin ring complex (gTuRC) consisting of TUBGCP2, TUBGCP3, TUBGCP4, TUBGCP5 and TUBGCP6 and gamma-tubulin TUBG1 or TUBG2. TUBGCP2, TUBGCP3, TUBGCP4, TUBGCP5 and TUBGCP6 assemble in a 5:5:2:1:1 stoichiometry; each is associated with a gamma-tubulin, thereby arranging 14 gamma-tubulins in a helical manner. Gamma-tubulin at the first position is blocked by TUBGCP3 at the last position, allowing 13 protafilaments to grow into a microtubule. The gTuRC (via TUBGCP3 and TUBGCP6) interacts with ACTB and MZT1; the interactions form a luminal bridge that stabilizes the initial structure during complex assembly. The gTuRC (via TUBGCP2) interacts with MZT2A/MZT2B and CDK5RAP2 (via CM1 motif); the interactions play a role in gTuRC activation. Interacts with NIN (via N-terminus); the interaction may promote recruitment of the gamma-tubulin ring complex to the centrosome. Ubiquitously expressed.

It localises to the cytoplasm. The protein localises to the cytoskeleton. The protein resides in the microtubule organizing center. It is found in the centrosome. Functionally, component of the gamma-tubulin ring complex (gTuRC) which mediates microtubule nucleation. The gTuRC regulates the minus-end nucleation of alpha-beta tubulin heterodimers that grow into microtubule protafilaments, a critical step in centrosome duplication and spindle formation. This is Gamma-tubulin complex component 3 (TUBGCP3) from Homo sapiens (Human).